We begin with the raw amino-acid sequence, 334 residues long: Replication factor C small subunit (334 aa).

Position 49–56 (49–56 (GPPGVGKT)) interacts with ATP.

It belongs to the activator 1 small subunits family. RfcS subfamily. Heteromultimer composed of small subunits (RfcS) and large subunits (RfcL).

In terms of biological role, part of the RFC clamp loader complex which loads the PCNA sliding clamp onto DNA. The sequence is that of Replication factor C small subunit from Methanosarcina barkeri (strain Fusaro / DSM 804).